The primary structure comprises 309 residues: Probable manganese-dependent inorganic pyrophosphatase (309 aa).

Residues histidine 9, aspartate 13, aspartate 15, aspartate 75, histidine 97, and aspartate 149 each coordinate Mn(2+).

It belongs to the PPase class C family. Mn(2+) serves as cofactor.

The protein localises to the cytoplasm. The enzyme catalyses diphosphate + H2O = 2 phosphate + H(+). This Staphylococcus haemolyticus (strain JCSC1435) protein is Probable manganese-dependent inorganic pyrophosphatase.